The primary structure comprises 387 residues: Cytochrome b (387 aa).

A run of 4 helical transmembrane segments spans residues 32 to 52 (FGSLLACVLVVQIVTGILLAC), 76 to 98 (FLLRALHANGASFFFIFLYLHIG), 113 to 133 (TWNIGVIIFLLTIITAFLGYC), and 179 to 199 (FFSLHYLMPFVIAALSIMHLI). Residues histidine 82 and histidine 96 each coordinate heme b. Heme b contacts are provided by histidine 183 and histidine 197. Histidine 202 is a binding site for a ubiquinone. The next 4 membrane-spanning stretches (helical) occupy residues 225 to 245 (FLIKDLITIFIFLLAINYMVF), 289 to 309 (QLGVVAMLLSILVLLLLPLLD), 321 to 341 (MGKFFFWCFVADFCILAWIGG), and 348 to 368 (FITIGAYATAFYFIYFFILIP).

The protein belongs to the cytochrome b family. As to quaternary structure, fungal cytochrome b-c1 complex contains 10 subunits; 3 respiratory subunits, 2 core proteins and 5 low-molecular weight proteins. Cytochrome b-c1 complex is a homodimer. Heme b is required as a cofactor.

It is found in the mitochondrion inner membrane. In terms of biological role, component of the ubiquinol-cytochrome c reductase complex (complex III or cytochrome b-c1 complex) that is part of the mitochondrial respiratory chain. The b-c1 complex mediates electron transfer from ubiquinol to cytochrome c. Contributes to the generation of a proton gradient across the mitochondrial membrane that is then used for ATP synthesis. This Schizosaccharomyces octosporus (Fission yeast) protein is Cytochrome b (cob).